Reading from the N-terminus, the 1025-residue chain is MSIVCSAEDSFRNLILFFRPRLKMYIQVEPVLDHLIFLSAETKEQILKKINTCGNTSAAELLLSTLEQGQWPLGWTQMFVEALEHSGNPLAARYVKPTLTDLPSPSSETAHDECLHLLTLLQPTLVDKLLINDVLDTCFEKGLLTVEDRNRISAAGNSGNESGVRELLRRIVQKENWFSTFLDVLRQTGNDALFQELTGGGCPEDNTDLANSSHRDGPAANECLLPAVDESSLETEAWNVDDILPEASCTDSSVTTESDTSLAEGSVSCFDESLGHNSNMGRDSGTMGSDSDESVIQTKRVSPEPELQLRPYQMEVAQPALDGKNIIICLPTGSGKTRVAVYITKDHLDKKKQASESGKVIVLVNKVMLAEQLFRKEFNPYLKKWYRIIGLSGDTQLKISFPEVVKSYDVIISTAQILENSLLNLESGDDDGVQLSDFSLIIIDECHHTNKEAVYNNIMRRYLKQKLRNNDLKKQNKPAIPLPQILGLTASPGVGAAKKQSEAEKHILNICANLDAFTIKTVKENLGQLKHQIKEPCKKFVIADDTRENPFKEKLLEIMASIQTYCQKSPMSDFGTQHYEQWAIQMEKKAAKDGNRKDRVCAEHLRKYNEALQINDTIRMIDAYSHLETFYTDEKEKKFAVLNDSDKSDDEASSCNDQLKGDVKKSLKLDETDEFLMNLFFDNKKMLKKLAENPKYENEKLIKLRNTILEQFTRSEESSRGIIFTKTRQSTYALSQWIMENAKFAEVGVKAHHLIGAGHSSEVKPMTQTEQKEVISKFRTGEINLLIATTVAEEGLDIKECNIVIRYGLVTNEIAMVQARGRARADESTYVLVTSSGSGVTEREIVNDFREKMMYKAINRVQNMKPEEYAHKILELQVQSILEKKMKVKRSIAKQYNDNPSLITLLCKNCSMLVCSGENIHVIEKMHHVNMTPEFKGLYIVRENKALQKKFADYQTNGEIICKCGQAWGTMMVHKGLDLPCLKIRNFVVNFKNNSPKKQYKKWVELPIRFPDLDYSEYCLYSDED.

CARD domains are found at residues 7 to 97 (AEDS…YVKP) and 110 to 190 (AHDE…QTGN). Glycyl lysine isopeptide (Lys-Gly) (interchain with G-Cter in ISG15) cross-links involve residues lysine 23 and lysine 43. The interval 273-297 (SLGHNSNMGRDSGTMGSDSDESVIQ) is disordered. A compositionally biased stretch (polar residues) spans 275–297 (GHNSNMGRDSGTMGSDSDESVIQ). Serine 289, serine 291, and serine 302 each carry phosphoserine. The Helicase ATP-binding domain occupies 317–510 (AQPALDGKNI…SEAEKHILNI (194 aa)). Phosphoserine occurs at positions 645 and 648. The 173-residue stretch at 700–872 (KLIKLRNTIL…NMKPEEYAHK (173 aa)) folds into the Helicase C-terminal domain. Position 828 is a phosphoserine; by RIOK3 (serine 828). The region spanning 893–1020 (AKQYNDNPSL…PDLDYSEYCL (128 aa)) is the RLR CTR domain. 4 residues coordinate Zn(2+): cysteine 907, cysteine 910, cysteine 962, and cysteine 964.

The protein belongs to the helicase family. RLR subfamily. In terms of assembly, monomer in the absence of ligands and homodimerizes in the presence of dsRNA ligands. Can assemble into helical or linear polymeric filaments on long dsRNA. Interacts with MAVS/IPS1. Interacts (via the CARD domains) with TKFC, the interaction is inhibited by viral infection. Interacts with PCBP2. Interacts with NLRC5. Interacts with PIAS2-beta. Interacts with DDX60. Interacts with ANKRD17. Interacts with IKBKE. Interacts with ATG5 and ATG12, either as ATG5 and ATG12 monomers or as ATG12-ATG5 conjugates. Interacts with ZCCHC3; leading to activate IFIH1/MDA5. Interacts with RNF123. Interacts with DDX3X. Interacts with NOD1; this interaction promotes transcription of antiviral genes and inhibition of viral replication. Interacts with ECSIT; this interaction bridges IFIH1 to the MAVS complex at the mitochondrion. During apoptosis, processed into 3 cleavage products. The helicase-containing fragment, once liberated from the CARD domains, translocate from the cytoplasm to the nucleus. The processed protein significantly sensitizes cells to DNA degradation. In terms of processing, sumoylated. Sumoylation positively regulates its role in type I interferon induction and is enhanced by PIAS2-beta. Post-translationally, ubiquitinated by RNF125, leading to its degradation by the proteasome. USP17/UPS17L2-dependent deubiquitination positively regulates the receptor. Ubiquitinated by TRIM25 via 'Lys-63'-linked ubiquitination, promoting activation of IFIH1/MDA5. Ubiquitinated by TRIM40 via 'Lys-48'-linked ubiquitination; leading to proteasomal degradation. Ubiquitinated by TRIM65 via 'Lys-63'-linked ubiquitination, promoting activation of IFIH1/MDA5. ISGylated by ISG15. ISGylation increases upon infection with viruses. ISGylation at Lys-23 and Lys-43 is dependent of dephosphorylation, regulates mitochondrial translocation and oligomerization. Essential for IFIH1/MDA5-mediated cytokine responses and restriction of virus replication. In terms of processing, phosphorylated. Dephosphorylated by phsophatases PP1; dephosphorylation precedes and is required for ISGylation. Expression is prominent in lung, liver, kidney, heart and spleen (at protein level). Widely expressed at low level.

The protein resides in the cytoplasm. It localises to the nucleus. The protein localises to the mitochondrion. The catalysed reaction is ATP + H2O = ADP + phosphate + H(+). Functionally, innate immune receptor which acts as a cytoplasmic sensor of viral nucleic acids and plays a major role in sensing viral infection and in the activation of a cascade of antiviral responses including the induction of type I interferons and pro-inflammatory cytokines. Its ligands include mRNA lacking 2'-O-methylation at their 5' cap and long-dsRNA (&gt;1 kb in length). Upon ligand binding it associates with mitochondria antiviral signaling protein (MAVS/IPS1) which activates the IKK-related kinases: TBK1 and IKBKE which phosphorylate interferon regulatory factors: IRF3 and IRF7 which in turn activate transcription of antiviral immunological genes, including interferons (IFNs); IFN-alpha and IFN-beta. Responsible for detecting the Picornaviridae family members such as encephalomyocarditis virus (EMCV), mengo encephalomyocarditis virus (ENMG), and theiler's murine encephalomyelitis virus (TMEV). Can also detect other viruses such as dengue virus (DENV), west Nile virus (WNV), and reovirus. Also involved in antiviral signaling in response to viruses containing a dsDNA genome, such as vaccinia virus. Plays an important role in amplifying innate immune signaling through recognition of RNA metabolites that are produced during virus infection by ribonuclease L (RNase L). May play an important role in enhancing natural killer cell function and may be involved in growth inhibition and apoptosis in several tumor cell lines. This Mus musculus (Mouse) protein is Interferon-induced helicase C domain-containing protein 1.